The primary structure comprises 378 residues: Protein FAM170B (378 aa).

3 disordered regions span residues 1–56, 244–265, and 277–378; these read MKHH…LPDD, TRDQKQDQQPVEEEQSLSDSSE, and QQQP…QQGK. Low complexity-rich tracts occupy residues 277-339 and 349-378; these read QQQP…QPLQ and PQKQQQRQQQRQQQPPRQQQKQQPLQQQGK.

This sequence belongs to the FAM170 family. As to quaternary structure, interacts with GOPC. Exclusively expressed in adult testis (at protein level). Expression first started at postnatal week 3 in round spermatids, elongated spermatids and mature sperm.

The protein localises to the cytoplasmic vesicle. It is found in the secretory vesicle. The protein resides in the acrosome. Its subcellular location is the acrosome outer membrane. In terms of biological role, plays a role in fertilization through the acrosome reaction. The polypeptide is Protein FAM170B (Mus musculus (Mouse)).